The primary structure comprises 290 residues: Shikimate dehydrogenase (NADP(+)) (290 aa).

Shikimate contacts are provided by residues 20 to 22 and T67; that span reads SLS. K71 serves as the catalytic Proton acceptor. Residues N92 and D107 each contribute to the shikimate site. Residues 132–136 and M228 contribute to the NADP(+) site; that span reads GAGGA. Residue Y230 coordinates shikimate. Position 251 (G251) interacts with NADP(+).

This sequence belongs to the shikimate dehydrogenase family. Homodimer.

It catalyses the reaction shikimate + NADP(+) = 3-dehydroshikimate + NADPH + H(+). It functions in the pathway metabolic intermediate biosynthesis; chorismate biosynthesis; chorismate from D-erythrose 4-phosphate and phosphoenolpyruvate: step 4/7. Its function is as follows. Involved in the biosynthesis of the chorismate, which leads to the biosynthesis of aromatic amino acids. Catalyzes the reversible NADPH linked reduction of 3-dehydroshikimate (DHSA) to yield shikimate (SA). The polypeptide is Shikimate dehydrogenase (NADP(+)) (Geobacter sp. (strain M21)).